The following is a 394-amino-acid chain: Elongation factor Tu (394 aa).

The tr-type G domain occupies 10–204 (KPHVNVGTIG…HLDNYIPEPE (195 aa)). A G1 region spans residues 19–26 (GHVDHGKT). Position 19–26 (19–26 (GHVDHGKT)) interacts with GTP. Mg(2+) is bound at residue Thr-26. A G2 region spans residues 60 to 64 (GITIN). A G3 region spans residues 81–84 (DCPG). GTP-binding positions include 81 to 85 (DCPGH) and 136 to 139 (NKCD). Positions 136–139 (NKCD) are G4. The G5 stretch occupies residues 174 to 176 (SAL).

Belongs to the TRAFAC class translation factor GTPase superfamily. Classic translation factor GTPase family. EF-Tu/EF-1A subfamily. As to quaternary structure, monomer.

Its subcellular location is the cytoplasm. It carries out the reaction GTP + H2O = GDP + phosphate + H(+). In terms of biological role, GTP hydrolase that promotes the GTP-dependent binding of aminoacyl-tRNA to the A-site of ribosomes during protein biosynthesis. This is Elongation factor Tu from Histophilus somni (strain 129Pt) (Haemophilus somnus).